We begin with the raw amino-acid sequence, 187 residues long: UPF0340 protein SMU_87 (187 aa).

The protein belongs to the UPF0340 family.

This chain is UPF0340 protein SMU_87, found in Streptococcus mutans serotype c (strain ATCC 700610 / UA159).